The primary structure comprises 516 residues: Probable fucosyltransferase 8 (516 aa).

The chain crosses the membrane as a helical; Signal-anchor for type II membrane protein span at residues 5 to 25 (ITVVTCLFLLSVMQLSFFNIF). The Lumenal segment spans residues 26 to 516 (NYQLLDATTN…ITGLKLVDSN (491 aa)). Residues Asn-35, Asn-116, Asn-211, Asn-362, and Asn-463 are each glycosylated (N-linked (GlcNAc...) asparagine).

This sequence belongs to the glycosyltransferase 37 family. As to expression, expressed in leaves and stems.

Its subcellular location is the golgi apparatus. It localises to the golgi stack membrane. The protein operates within protein modification; protein glycosylation. May be involved in cell wall biosynthesis. May act as a fucosyltransferase. The polypeptide is Probable fucosyltransferase 8 (FUT8) (Arabidopsis thaliana (Mouse-ear cress)).